The following is a 381-amino-acid chain: Succinyl-diaminopimelate desuccinylase (381 aa).

Residue histidine 68 coordinates Zn(2+). Residue aspartate 70 is part of the active site. Aspartate 101 is a Zn(2+) binding site. Catalysis depends on glutamate 135, which acts as the Proton acceptor. Zn(2+) is bound by residues glutamate 136, glutamate 164, and histidine 350.

It belongs to the peptidase M20A family. DapE subfamily. Homodimer. The cofactor is Zn(2+). It depends on Co(2+) as a cofactor.

It catalyses the reaction N-succinyl-(2S,6S)-2,6-diaminopimelate + H2O = (2S,6S)-2,6-diaminopimelate + succinate. Its pathway is amino-acid biosynthesis; L-lysine biosynthesis via DAP pathway; LL-2,6-diaminopimelate from (S)-tetrahydrodipicolinate (succinylase route): step 3/3. Its function is as follows. Catalyzes the hydrolysis of N-succinyl-L,L-diaminopimelic acid (SDAP), forming succinate and LL-2,6-diaminopimelate (DAP), an intermediate involved in the bacterial biosynthesis of lysine and meso-diaminopimelic acid, an essential component of bacterial cell walls. The sequence is that of Succinyl-diaminopimelate desuccinylase from Neisseria meningitidis serogroup C (strain 053442).